The following is a 31-amino-acid chain: Cytochrome b6-f complex subunit 6 (31 aa).

A helical transmembrane segment spans residues 3–23 (ALIGYILLMTLMFSLAAGLYF).

The protein belongs to the PetL family. As to quaternary structure, the 4 large subunits of the cytochrome b6-f complex are cytochrome b6, subunit IV (17 kDa polypeptide, PetD), cytochrome f and the Rieske protein, while the 4 small subunits are PetG, PetL, PetM and PetN. The complex functions as a dimer.

The protein resides in the plastid. It is found in the chloroplast thylakoid membrane. In terms of biological role, component of the cytochrome b6-f complex, which mediates electron transfer between photosystem II (PSII) and photosystem I (PSI), cyclic electron flow around PSI, and state transitions. PetL is important for photoautotrophic growth as well as for electron transfer efficiency and stability of the cytochrome b6-f complex. The chain is Cytochrome b6-f complex subunit 6 from Emiliania huxleyi (Coccolithophore).